Here is an 886-residue protein sequence, read N- to C-terminus: DNA gyrase subunit A (886 aa).

One can recognise a Topo IIA-type catalytic domain in the interval 35–501; the sequence is LPDVRDGLKP…GFEDLEDEDL (467 aa). The active-site O-(5'-phospho-DNA)-tyrosine intermediate is the Tyr-123. Positions 528–534 match the GyrA-box motif; sequence QNRGGRG. The tract at residues 810-860 is disordered; it reads VKEDADEENEDEQSTVSEDGTEQQREAVVNDETPGNAIHTEVIDSEVNDED. A compositionally biased stretch (acidic residues) spans 813–822; the sequence is DADEENEDEQ.

This sequence belongs to the type II topoisomerase GyrA/ParC subunit family. In terms of assembly, heterotetramer, composed of two GyrA and two GyrB chains. In the heterotetramer, GyrA contains the active site tyrosine that forms a transient covalent intermediate with DNA, while GyrB binds cofactors and catalyzes ATP hydrolysis.

Its subcellular location is the cytoplasm. The catalysed reaction is ATP-dependent breakage, passage and rejoining of double-stranded DNA.. Its function is as follows. A type II topoisomerase that negatively supercoils closed circular double-stranded (ds) DNA in an ATP-dependent manner to modulate DNA topology and maintain chromosomes in an underwound state. Negative supercoiling favors strand separation, and DNA replication, transcription, recombination and repair, all of which involve strand separation. Also able to catalyze the interconversion of other topological isomers of dsDNA rings, including catenanes and knotted rings. Type II topoisomerases break and join 2 DNA strands simultaneously in an ATP-dependent manner. The polypeptide is DNA gyrase subunit A (Staphylococcus aureus (strain MRSA252)).